The sequence spans 527 residues: Tyrosine-protein kinase TXK (527 aa).

The interval 58-81 (TQSNRGGVQPSKRKPLPPLPQEPP) is disordered. Positions 82–142 (DERIQVKALY…PSNYVTENRL (61 aa)) constitute an SH3 domain. Tyr91 is modified (phosphotyrosine; by autocatalysis). One can recognise an SH2 domain in the interval 150-246 (WYHKNITRNQ…GLISRLRYPI (97 aa)). The Protein kinase domain maps to 271 to 527 (LAFVKEIGSG…QVLTEIAETW (257 aa)). ATP contacts are provided by residues 277–285 (IGSGQFGVV) and Lys299. Residue Asp390 is the Proton acceptor of the active site. At Tyr420 the chain carries Phosphotyrosine; by FYN and autocatalysis.

This sequence belongs to the protein kinase superfamily. Tyr protein kinase family. TEC subfamily. In terms of assembly, interacts with PARP1 and EEF1A1. Interacts with SH2D2A. Interacts with FYN. Phosphorylated at Tyr-420 by FYN. Autophosphorylation at Tyr-91 is critical for the activation of TXK, leading to the up-regulation of IFN-gamma gene transcription. In terms of processing, the cysteine string at the N-terminus is palmitoylated and required for the proper subcellular location. In terms of tissue distribution, expressed in early thymocytes, T-cells and mast cells.

The protein localises to the cytoplasm. It localises to the nucleus. It is found in the cell membrane. The enzyme catalyses L-tyrosyl-[protein] + ATP = O-phospho-L-tyrosyl-[protein] + ADP + H(+). Its activity is regulated as follows. Activated by phosphorylation by FYN. Functionally, non-receptor tyrosine kinase that plays a redundant role with ITK in regulation of the adaptive immune response. Regulates the development, function and differentiation of conventional T-cells and nonconventional NKT-cells. When antigen presenting cells (APC) activate T-cell receptor (TCR), a series of phosphorylation leads to the recruitment of TXK to the cell membrane, where it is phosphorylated at Tyr-420. Phosphorylation leads to TXK full activation. Also contributes to signaling from many receptors and participates in multiple downstream pathways, including regulation of the actin cytoskeleton. Like ITK, can phosphorylate PLCG1, leading to its localization in lipid rafts and activation, followed by subsequent cleavage of its substrates. In turn, the endoplasmic reticulum releases calcium in the cytoplasm and the nuclear activator of activated T-cells (NFAT) translocates into the nucleus to perform its transcriptional duty. Plays a role in the positive regulation of IFNG transcription in T-helper 1 cells as part of an IFNG promoter-binding complex with PARP1 and EEF1A1. Within the complex, phosphorylates both PARP1 and EEF1A1. Also phosphorylates key sites in LCP2 leading to the up-regulation of Th1 preferred cytokine IL-2. Phosphorylates 'Tyr-201' of CTLA4 which leads to the association of PI-3 kinase with the CTLA4 receptor. This Mus musculus (Mouse) protein is Tyrosine-protein kinase TXK (Txk).